Reading from the N-terminus, the 311-residue chain is MKDYCAIEQIYHRPLDELLGEALQAKKLSGRNGVQFCQLLNIKSGGCSEDCKYCAQSAHYRTPIEKGALLDEEEILQAGLQAKEKGASRFCLGAAWRGLFEGETKTKKICKIISKISSLGMELCLSAGFLTEKTALMLKESGLKVYNHNLNTGPSYYPRIASTHRFEDRLQTIRIVQKVGLKLCSGGIIGMGERLKDRLEMLFCLYSLPEAPESIPINVYMPIEGTPFYGTPPLDYMDLIRMIATTRILFPLSRIRLAAGRKLLDEKTLTLCYLAGVDSIFIGEKLLTQSNVQLEKDYALLKKLNLRKEER.

The Radical SAM core domain occupies 32–258 (NGVQFCQLLN…LFPLSRIRLA (227 aa)). Positions 47, 51, and 54 each coordinate [4Fe-4S] cluster. The [2Fe-2S] cluster site is built by cysteine 91, cysteine 124, cysteine 184, and arginine 256.

Belongs to the radical SAM superfamily. Biotin synthase family. Homodimer. It depends on [4Fe-4S] cluster as a cofactor. Requires [2Fe-2S] cluster as cofactor.

It catalyses the reaction (4R,5S)-dethiobiotin + (sulfur carrier)-SH + 2 reduced [2Fe-2S]-[ferredoxin] + 2 S-adenosyl-L-methionine = (sulfur carrier)-H + biotin + 2 5'-deoxyadenosine + 2 L-methionine + 2 oxidized [2Fe-2S]-[ferredoxin]. It participates in cofactor biosynthesis; biotin biosynthesis; biotin from 7,8-diaminononanoate: step 2/2. In terms of biological role, catalyzes the conversion of dethiobiotin (DTB) to biotin by the insertion of a sulfur atom into dethiobiotin via a radical-based mechanism. The chain is Biotin synthase from Methylacidiphilum infernorum (isolate V4) (Methylokorus infernorum (strain V4)).